A 107-amino-acid polypeptide reads, in one-letter code: Nucleoid-associated protein Mlg_1509 (107 aa).

The protein belongs to the YbaB/EbfC family. In terms of assembly, homodimer.

Its subcellular location is the cytoplasm. It localises to the nucleoid. Functionally, binds to DNA and alters its conformation. May be involved in regulation of gene expression, nucleoid organization and DNA protection. The polypeptide is Nucleoid-associated protein Mlg_1509 (Alkalilimnicola ehrlichii (strain ATCC BAA-1101 / DSM 17681 / MLHE-1)).